The sequence spans 239 residues: tRNA (guanine-N(1)-)-methyltransferase (239 aa).

Residues G112 and 131-136 each bind S-adenosyl-L-methionine; that span reads LGDFIL.

This sequence belongs to the RNA methyltransferase TrmD family. Homodimer.

It is found in the cytoplasm. It carries out the reaction guanosine(37) in tRNA + S-adenosyl-L-methionine = N(1)-methylguanosine(37) in tRNA + S-adenosyl-L-homocysteine + H(+). Specifically methylates guanosine-37 in various tRNAs. In Clostridium tetani (strain Massachusetts / E88), this protein is tRNA (guanine-N(1)-)-methyltransferase.